The primary structure comprises 229 residues: DNA mismatch repair protein MutH (229 aa).

This sequence belongs to the MutH family.

The protein resides in the cytoplasm. Functionally, sequence-specific endonuclease that cleaves unmethylated GATC sequences. It is involved in DNA mismatch repair. The chain is DNA mismatch repair protein MutH from Escherichia coli (strain SMS-3-5 / SECEC).